A 333-amino-acid chain; its full sequence is MFYDDDADLSIIQGRKVGVIGYGSQGHAHSLSLRDSGVQVRVGLKQGSRSRPKVEEQGLDVDTPAEVAKWADVVMVLAPDTAQAEIFAGDIEPNLKPGDALFFGHGLNVHFGLIKPPADVAVAMVAPKGPGHLVRRQFVDGKGVPCLVAVEQDPRGDGLALALSYAKAIGGTRAGVIKTTFKDETETDLFGEQTVLCGGTEELVKAGFEVMVEAGYPAELAYFEVLHELKLIVDLMYEGGLARMYYSVSDTAEFGGYLSGPRVIDAGTKERMRDILREIQDGSFVHKLVADVEGGNKQLEELRRQNAEHPIEVVGKKLRDLMSWVDRPITETA.

Residues 1–179 form the KARI N-terminal Rossmann domain; it reads MFYDDDADLS…GGTRAGVIKT (179 aa). Residues 22-25, lysine 45, serine 48, serine 50, and 80-83 contribute to the NADP(+) site; these read YGSQ and DTAQ. Residue histidine 105 is part of the active site. Glycine 131 is a binding site for NADP(+). The KARI C-terminal knotted domain occupies 180–325; that stretch reads TFKDETETDL…KKLRDLMSWV (146 aa). Residues aspartate 188, glutamate 192, glutamate 224, and glutamate 228 each coordinate Mg(2+). Serine 249 contributes to the substrate binding site.

This sequence belongs to the ketol-acid reductoisomerase family. It depends on Mg(2+) as a cofactor.

It catalyses the reaction (2R)-2,3-dihydroxy-3-methylbutanoate + NADP(+) = (2S)-2-acetolactate + NADPH + H(+). The enzyme catalyses (2R,3R)-2,3-dihydroxy-3-methylpentanoate + NADP(+) = (S)-2-ethyl-2-hydroxy-3-oxobutanoate + NADPH + H(+). It functions in the pathway amino-acid biosynthesis; L-isoleucine biosynthesis; L-isoleucine from 2-oxobutanoate: step 2/4. It participates in amino-acid biosynthesis; L-valine biosynthesis; L-valine from pyruvate: step 2/4. Functionally, involved in the biosynthesis of branched-chain amino acids (BCAA). Catalyzes an alkyl-migration followed by a ketol-acid reduction of (S)-2-acetolactate (S2AL) to yield (R)-2,3-dihydroxy-isovalerate. In the isomerase reaction, S2AL is rearranged via a Mg-dependent methyl migration to produce 3-hydroxy-3-methyl-2-ketobutyrate (HMKB). In the reductase reaction, this 2-ketoacid undergoes a metal-dependent reduction by NADPH to yield (R)-2,3-dihydroxy-isovalerate. In Mycobacterium bovis (strain ATCC BAA-935 / AF2122/97), this protein is Ketol-acid reductoisomerase (NADP(+)).